We begin with the raw amino-acid sequence, 254 residues long: Acetylglutamate kinase (254 aa).

Residues 40–41 (GG), arginine 62, and asparagine 154 each bind substrate.

This sequence belongs to the acetylglutamate kinase family. ArgB subfamily.

The protein resides in the cytoplasm. The catalysed reaction is N-acetyl-L-glutamate + ATP = N-acetyl-L-glutamyl 5-phosphate + ADP. Its pathway is amino-acid biosynthesis; L-arginine biosynthesis; N(2)-acetyl-L-ornithine from L-glutamate: step 2/4. Catalyzes the ATP-dependent phosphorylation of N-acetyl-L-glutamate. The chain is Acetylglutamate kinase from Staphylococcus aureus (strain Mu3 / ATCC 700698).